Consider the following 248-residue polypeptide: tRNA uridine(34) hydroxylase (248 aa).

A Rhodanese domain is found at 124 to 218 (TKQDVIVVDT…YLEDTQNKNN (95 aa)). Cysteine 178 serves as the catalytic Cysteine persulfide intermediate.

Belongs to the TrhO family.

The enzyme catalyses uridine(34) in tRNA + AH2 + O2 = 5-hydroxyuridine(34) in tRNA + A + H2O. In terms of biological role, catalyzes oxygen-dependent 5-hydroxyuridine (ho5U) modification at position 34 in tRNAs. The chain is tRNA uridine(34) hydroxylase from Rickettsia bellii (strain OSU 85-389).